The following is a 509-amino-acid chain: Maturase K (509 aa).

Belongs to the intron maturase 2 family. MatK subfamily.

It localises to the plastid. It is found in the chloroplast. Functionally, usually encoded in the trnK tRNA gene intron. Probably assists in splicing its own and other chloroplast group II introns. This Anthocercis angustifolia (Narrow-leaf ray-flower) protein is Maturase K.